A 428-amino-acid polypeptide reads, in one-letter code: MAIIEQVGAREILDSRGNPTVEVEIALDDGTLTRAAVPSGASTGEHEAVELRDGGDRYNGKGVLKAVEGVLDEIAPAVIGLDAVEQRTVDQVLLDLDGTPDKSRLGANALLGVSLAVARAAAESSGLELFRYLGGPNAHVLPVPMMNILNGGAHADTGVDVQEFMVAPIGAPTFKESLRWGAEVYHALKAVLKSKGLSTGLGDEGGFAPDVAGTREALDLIAQAIAKTGLKLGSDVALALDVAATEFYTSGSGYKFEGTVRSAEEMAQFYSELLGAYPLVSIEDPLSEDDWDGWVALTDQIGDKIQLVGDDLFVTNPERLEDGIAKGAANALLVKVNQIGTLTETLDAVELAHRNGYKTMMSHRSGETEDTTIADLAVAVGSGQIKTGAPARSERVAKYNQLLRIEDALGDSARYAGDVAFPRFVFDG.

Gln-162 is a binding site for (2R)-2-phosphoglycerate. Glu-204 functions as the Proton donor in the catalytic mechanism. Asp-241, Glu-283, and Asp-310 together coordinate Mg(2+). (2R)-2-phosphoglycerate contacts are provided by Lys-335, Arg-364, Ser-365, and Lys-386. Lys-335 acts as the Proton acceptor in catalysis.

It belongs to the enolase family. Requires Mg(2+) as cofactor.

It localises to the cytoplasm. The protein resides in the secreted. Its subcellular location is the cell surface. It catalyses the reaction (2R)-2-phosphoglycerate = phosphoenolpyruvate + H2O. Its pathway is carbohydrate degradation; glycolysis; pyruvate from D-glyceraldehyde 3-phosphate: step 4/5. In terms of biological role, catalyzes the reversible conversion of 2-phosphoglycerate (2-PG) into phosphoenolpyruvate (PEP). It is essential for the degradation of carbohydrates via glycolysis. The sequence is that of Enolase from Nocardia farcinica (strain IFM 10152).